Reading from the N-terminus, the 426-residue chain is Glutamate-1-semialdehyde 2,1-aminomutase (426 aa).

Lysine 265 bears the N6-(pyridoxal phosphate)lysine mark.

It belongs to the class-III pyridoxal-phosphate-dependent aminotransferase family. HemL subfamily. As to quaternary structure, homodimer. The cofactor is pyridoxal 5'-phosphate.

The protein resides in the cytoplasm. The enzyme catalyses (S)-4-amino-5-oxopentanoate = 5-aminolevulinate. The protein operates within porphyrin-containing compound metabolism; protoporphyrin-IX biosynthesis; 5-aminolevulinate from L-glutamyl-tRNA(Glu): step 2/2. This is Glutamate-1-semialdehyde 2,1-aminomutase from Shigella sonnei (strain Ss046).